We begin with the raw amino-acid sequence, 2090 residues long: Ninein (2090 aa).

EF-hand domains are found at residues 8-43 (QHEA…LSLE) and 42-77 (LEEV…ILSR). A Phosphoserine modification is found at Ser-152. EF-hand domains are found at residues 182–217 (WIEE…YGLQ) and 219–252 (VDGE…NGKS). 245–252 (GLFKNGKS) contributes to the GTP binding site. Ser-269 carries the phosphoserine modification. 300-304 (DGMGH) contributes to the GTP binding site. The region spanning 317-352 (EGIENSQEILKALDFSLDGNINLTELTLALENELLV) is the EF-hand 5 domain. A coiled-coil region spans residues 357-570 (IHQAALASFK…YRAQGRVLRL (214 aa)). Position 420–423 (420–423 (RKLD)) interacts with GTP. A disordered region spans residues 574–595 (NSPSEEVEANSGGIEPEHGLGS). Coiled coils occupy residues 625–1027 (LRLE…QATS), 1068–1099 (LSLQ…QKLE), 1181–1341 (SELE…SVVQ), and 1441–1816 (QDKH…AGGK). An important for interaction with CEP170 region spans residues 802 to 1505 (KMETECNRRT…HDLQITCSEM (704 aa)). The tract at residues 1152-1190 (VRDLGSTGTSSVQRQEVKIEESEASVEGFSELENSEETR) is disordered. 2 positions are modified to phosphoserine: Ser-1550 and Ser-1837. Coiled coils occupy residues 1854-1885 (QENE…SNLL) and 1922-2067 (ANRK…QVSL).

As to quaternary structure, homooligomer. Interacts with GSK3B/GSK3-beta via its C-terminal domain. Interacts with C14ORF166, such interaction may prevent its phosphorylation by GSK3B. Interacts with AUNIP (via N-terminus). Identified in a complex with AUNIP and AURKA. Interacts with CCDC120. Interacts (via C-terminus) with CEP250. Interacts with CEP170. Interacts with the gamma-tubulin ring complex component TUBGCP3. Interacts with gamma-tubulin. Isoform 6 does not interact with CEP170 or CEP250. Phosphorylated by AURKA/Aurora kinase A and PKA kinases but not CK2 or AURKB/ Aurora kinase B. In terms of tissue distribution, ubiquitous. Highly expressed in heart and skeletal muscle. Isoform 1 is more expressed than isoform 5.

It is found in the cytoplasm. The protein localises to the cytoskeleton. It localises to the microtubule organizing center. The protein resides in the centrosome. Its subcellular location is the centriole. In terms of biological role, centrosomal protein required in the positioning and anchorage of the microtubule minus-end in epithelial cells. May also act as a centrosome maturation factor. May play a role in microtubule nucleation, by recruiting the gamma-tubulin ring complex to the centrosome. Overexpression does not perturb nucleation or elongation of microtubules but suppresses release of microtubules. Required for centriole organization and microtubule anchoring at the mother centriole. The polypeptide is Ninein (NIN) (Homo sapiens (Human)).